Here is a 218-residue protein sequence, read N- to C-terminus: Probable carboxylesterase clz11 (218 aa).

Residues 7 to 9 (LVG) carry the Involved in the stabilization of the negatively charged intermediate by the formation of the oxyanion hole motif. Serine 77 is an active-site residue.

It belongs to the 'GDXG' lipolytic enzyme family.

The enzyme catalyses a carboxylic ester + H2O = an alcohol + a carboxylate + H(+). Its pathway is secondary metabolite biosynthesis. Its function is as follows. Probable carboxylesterase; part of the gene cluster that mediates the biosynthesis of squalestatin S1 (SQS1, also known as zaragozic acid A), a heavily oxidized fungal polyketide that offers potent cholesterol lowering activity by targeting squalene synthase (SS). SQS1 is composed of a 2,8-dioxobicyclic[3.2.1]octane-3,4,5-tricarboxyclic acid core that is connected to two lipophilic polyketide arms. These initial steps feature the priming of an unusual benzoic acid starter unit onto the highly reducing polyketide synthase clz14, followed by oxaloacetate extension and product release to generate a tricarboxylic acid containing product. The phenylalanine ammonia lyase (PAL) clz10 and the acyl-CoA ligase clz12 are involved in transforming phenylalanine into benzoyl-CoA. The citrate synthase-like protein clz17 is involved in connecting the C-alpha-carbons of the hexaketide chain and oxaloacetate to afford the tricarboxylic acid unit. The potential hydrolytic enzymes, clz11 and clz13, are in close proximity to pks2 and may participate in product release. On the other side, the tetraketide arm is synthesized by a the squalestatin tetraketide synthase clz2 and enzymatically esterified to the core in the last biosynthetic step, by the acetyltransferase clz6. The biosynthesis of the tetraketide must involve 3 rounds of chain extension. After the first and second rounds methyl-transfer occurs, and in all rounds of extension the ketoreductase and dehydratase are active. The enoyl reductase and C-MeT of clz2 are not active in the final round of extension. The acetyltransferase clz6 appears to have a broad substrate selectivity for its acyl CoA substrate, allowing the in vitro synthesis of novel squalestatins. The biosynthesis of SQS1 requires several oxidative steps likely performed by oxidoreductases clz3, clz15 and clz16. Finally, in support of the identification of the cluster as being responsible for SQS1 production, the cluster contains a gene encoding a putative squalene synthase (SS) clz20, suggesting a likely mechanism for self-resistance. In Cochliobolus lunatus (Filamentous fungus), this protein is Probable carboxylesterase clz11.